The chain runs to 59 residues: Insulin (59 aa).

3 disulfide bridges follow: cysteine 7/cysteine 45, cysteine 19/cysteine 58, and cysteine 44/cysteine 49.

It belongs to the insulin family. In terms of assembly, heterodimer of a B chain and an A chain linked by two disulfide bonds.

The protein resides in the secreted. Its function is as follows. Insulin decreases blood glucose concentration. It increases cell permeability to monosaccharides, amino acids and fatty acids. It accelerates glycolysis, the pentose phosphate cycle, and glycogen synthesis in liver. The chain is Insulin (ins) from Chimaera monstrosa (Rabbit fish).